We begin with the raw amino-acid sequence, 75 residues long: ORF2p protein (75 aa).

Residues 13-18 (WIGHPV) form an important for viral replication in intestinal cells region. The hydrophobic stretch at 23-45 (IVYLFVGFTPLTLETLHTLNYII) threads the membrane. The tract at residues 53–75 (APRSPHSDPARMRIPTQPRKAPL) is disordered.

The protein localises to the host cytoplasmic vesicle membrane. Facilitates virus release from intestinal cells in vitro, possibly through the host autophagic pathway. This Human enterovirus 71 (strain USA/BrCr/1970) (EV71) protein is ORF2p protein.